The following is a 393-amino-acid chain: Formate-dependent phosphoribosylglycinamide formyltransferase (393 aa).

N(1)-(5-phospho-beta-D-ribosyl)glycinamide-binding positions include Glu22 to Leu23 and Glu82. ATP contacts are provided by residues Arg114, Lys155, Ser160 to Gln165, Glu195 to Val198, and Glu203. The 190-residue stretch at Arg119–Leu308 folds into the ATP-grasp domain. Residues Glu267 and Glu279 each contribute to the Mg(2+) site. N(1)-(5-phospho-beta-D-ribosyl)glycinamide contacts are provided by residues Asp286, Lys356, and Arg363–Arg364.

Belongs to the PurK/PurT family. As to quaternary structure, homodimer.

The catalysed reaction is N(1)-(5-phospho-beta-D-ribosyl)glycinamide + formate + ATP = N(2)-formyl-N(1)-(5-phospho-beta-D-ribosyl)glycinamide + ADP + phosphate + H(+). Its pathway is purine metabolism; IMP biosynthesis via de novo pathway; N(2)-formyl-N(1)-(5-phospho-D-ribosyl)glycinamide from N(1)-(5-phospho-D-ribosyl)glycinamide (formate route): step 1/1. Its function is as follows. Involved in the de novo purine biosynthesis. Catalyzes the transfer of formate to 5-phospho-ribosyl-glycinamide (GAR), producing 5-phospho-ribosyl-N-formylglycinamide (FGAR). Formate is provided by PurU via hydrolysis of 10-formyl-tetrahydrofolate. The protein is Formate-dependent phosphoribosylglycinamide formyltransferase of Oleidesulfovibrio alaskensis (strain ATCC BAA-1058 / DSM 17464 / G20) (Desulfovibrio alaskensis).